The sequence spans 206 residues: Small ribosomal subunit protein uS4 (206 aa).

In terms of domain architecture, S4 RNA-binding spans 96 to 156 (CRLDNVVYRM…EKAKNQLRIV (61 aa)).

The protein belongs to the universal ribosomal protein uS4 family. In terms of assembly, part of the 30S ribosomal subunit. Contacts protein S5. The interaction surface between S4 and S5 is involved in control of translational fidelity.

Functionally, one of the primary rRNA binding proteins, it binds directly to 16S rRNA where it nucleates assembly of the body of the 30S subunit. Its function is as follows. With S5 and S12 plays an important role in translational accuracy. The sequence is that of Small ribosomal subunit protein uS4 from Pseudomonas fluorescens (strain Pf0-1).